The sequence spans 729 residues: Fatty acid oxidation complex subunit alpha (729 aa).

An enoyl-CoA hydratase/isomerase region spans residues 1-189; the sequence is MLYKGDTLYL…KIGLVDGVVK (189 aa). Asp296 lines the substrate pocket. Residues 311 to 729 form a 3-hydroxyacyl-CoA dehydrogenase region; sequence ETPKQAAVLG…ARPVGDLKTA (419 aa). NAD(+) is bound by residues Met324, Asp343, 400–402, Lys407, and Ser429; that span reads VVE. The active-site For 3-hydroxyacyl-CoA dehydrogenase activity is His450. Asn453 contributes to the NAD(+) binding site. Residues Asn500 and Tyr660 each coordinate substrate. The tract at residues 707–729 is disordered; sequence ARHNEPYYPPVEPARPVGDLKTA.

This sequence in the N-terminal section; belongs to the enoyl-CoA hydratase/isomerase family. In the C-terminal section; belongs to the 3-hydroxyacyl-CoA dehydrogenase family. In terms of assembly, heterotetramer of two alpha chains (FadB) and two beta chains (FadA).

The enzyme catalyses a (3S)-3-hydroxyacyl-CoA + NAD(+) = a 3-oxoacyl-CoA + NADH + H(+). It catalyses the reaction a (3S)-3-hydroxyacyl-CoA = a (2E)-enoyl-CoA + H2O. It carries out the reaction a 4-saturated-(3S)-3-hydroxyacyl-CoA = a (3E)-enoyl-CoA + H2O. The catalysed reaction is (3S)-3-hydroxybutanoyl-CoA = (3R)-3-hydroxybutanoyl-CoA. The enzyme catalyses a (3Z)-enoyl-CoA = a 4-saturated (2E)-enoyl-CoA. It catalyses the reaction a (3E)-enoyl-CoA = a 4-saturated (2E)-enoyl-CoA. It participates in lipid metabolism; fatty acid beta-oxidation. Involved in the aerobic and anaerobic degradation of long-chain fatty acids via beta-oxidation cycle. Catalyzes the formation of 3-oxoacyl-CoA from enoyl-CoA via L-3-hydroxyacyl-CoA. It can also use D-3-hydroxyacyl-CoA and cis-3-enoyl-CoA as substrate. The protein is Fatty acid oxidation complex subunit alpha of Escherichia coli O6:K15:H31 (strain 536 / UPEC).